We begin with the raw amino-acid sequence, 396 residues long: N-acyl-phosphatidylethanolamine-hydrolyzing phospholipase D (396 aa).

M1 bears the N-acetylmethionine mark. 2 stretches are compositionally biased toward polar residues: residues 1–12 (MDENENSQSPAP) and 26–37 (NSVQNSGGSESS). Residues 1–41 (MDENENSQSPAPSHQYPKETLRKRQNSVQNSGGSESSRLSR) are disordered. Residues H185 and H187 each coordinate Zn(2+). Y188 contacts an N-acyl-1,2-diacyl-sn-glycero-3-phosphoethanolamine. Residues D189, H190, and H253 each contribute to the Zn(2+) site. K256 contacts deoxycholate. D284 provides a ligand contact to Zn(2+). H321 provides a ligand contact to an N-acyl-1,2-diacyl-sn-glycero-3-phosphoethanolamine. H343 is a Zn(2+) binding site. Position 348 (A348) interacts with deoxycholate.

This sequence belongs to the NAPE-PLD family. As to quaternary structure, homodimer. Bile acids promote the assembly of inactive monomers into an active dimer and enable catalysis. The cofactor is Zn(2+). Widely expressed. Highest expression in brain, kidney and testis (at protein level). Expressed in adipose tissue (at protein level).

Its subcellular location is the golgi apparatus membrane. It localises to the early endosome membrane. It is found in the nucleus envelope. The protein localises to the nucleus. The protein resides in the nucleoplasm. The catalysed reaction is an N-acyl-1,2-diacyl-sn-glycero-3-phosphoethanolamine + H2O = an N-acylethanolamine + a 1,2-diacyl-sn-glycero-3-phosphate + H(+). The enzyme catalyses N-butanoyl-1-hexadecanoyl-2-(9Z,12Z-octadecadienoyl)-sn-glycero-3-phosphoethanolamine + H2O = N-butanoyl ethanolamine + 1-hexadecanoyl-2-(9Z,12Z-octadecadienoyl)-sn-glycero-3-phosphate + H(+). It catalyses the reaction N-hexanoyl-1-hexadecanoyl-2-(9Z,12Z-octadecadienoyl)-sn-glycero-3-phosphoethanolamine + H2O = N-hexanoyl ethanolamine + 1-hexadecanoyl-2-(9Z,12Z-octadecadienoyl)-sn-glycero-3-phosphate + H(+). It carries out the reaction N-octanoyl-1-hexadecanoyl-2-(9Z,12Z-octadecadienoyl)-sn-glycero-3-phosphoethanolamine + H2O = N-octanoyl ethanolamine + 1-hexadecanoyl-2-(9Z,12Z-octadecadienoyl)-sn-glycero-3-phosphate + H(+). The catalysed reaction is N-decanoyl-1-hexadecanoyl-2-(9Z,12Z-octadecadienoyl)-sn-glycero-3-phosphoethanolamine + H2O = N-decanoyl ethanolamine + 1-hexadecanoyl-2-(9Z,12Z-octadecadienoyl)-sn-glycero-3-phosphate + H(+). The enzyme catalyses N-dodecanoyl-1,2-di-(9Z-octadecenoyl)-sn-glycero-3-phosphoethanolamine + H2O = N-dodecanoylethanolamine + 1,2-di-(9Z-octadecenoyl)-sn-glycero-3-phosphate + H(+). It catalyses the reaction N-tetradecanoyl-1,2-di-(9Z-octadecenoyl)-sn-glycero-3-phosphoethanolamine + H2O = N-tetradecanoylethanolamine + 1,2-di-(9Z-octadecenoyl)-sn-glycero-3-phosphate + H(+). It carries out the reaction N-hexadecanoyl-1,2-di-(9Z-octadecenoyl)-sn-glycero-3-phosphoethanolamine + H2O = N-hexadecanoylethanolamine + 1,2-di-(9Z-octadecenoyl)-sn-glycero-3-phosphate + H(+). The catalysed reaction is N,1-dihexadecanoyl-2-(9Z,12Z-octadecadienoyl)-sn-glycero-3-phosphoethanolamine + H2O = 1-hexadecanoyl-2-(9Z,12Z-octadecadienoyl)-sn-glycero-3-phosphate + N-hexadecanoylethanolamine + H(+). The enzyme catalyses N-octadecanoyl-1,2-di-(9Z-octadecenoyl)-sn-glycero-3-phosphoethanolamine + H2O = N-octadecanoyl ethanolamine + 1,2-di-(9Z-octadecenoyl)-sn-glycero-3-phosphate + H(+). It catalyses the reaction N,1,2-tri-(9Z-octadecenoyl)-sn-glycero-3-phosphoethanolamine + H2O = N-(9Z-octadecenoyl) ethanolamine + 1,2-di-(9Z-octadecenoyl)-sn-glycero-3-phosphate + H(+). It carries out the reaction N-(5Z,8Z,11Z,14Z-eicosatetraenoyl)-1,2-diacyl-sn-glycero-3-phosphoethanolamine + H2O = N-(5Z,8Z,11Z,14Z-eicosatetraenoyl)-ethanolamine + a 1,2-diacyl-sn-glycero-3-phosphate + H(+). The catalysed reaction is N-(5Z,8Z,11Z,14Z-eicosatetraenoyl)-1,2-di-(9Z-octadecenoyl)-sn-glycero-3-phosphoethanolamine + H2O = N-(5Z,8Z,11Z,14Z-eicosatetraenoyl)-ethanolamine + 1,2-di-(9Z-octadecenoyl)-sn-glycero-3-phosphate + H(+). The enzyme catalyses 1-O-(1Z-octadecenoyl)-2-(9Z-octadecenoyl)-sn-glycero-3-phospho-N-hexadecanoyl-ethanolamine + H2O = 1-O-(1Z-octadecenoyl)-2-(9Z-octadecenoyl)-sn-glycero-3-phosphate + N-hexadecanoylethanolamine + H(+). It catalyses the reaction N,1-diacyl-sn-glycero-3-phosphoethanolamine + H2O = an N-acylethanolamine + a 1-acyl-sn-glycero-3-phosphate + H(+). It carries out the reaction N,1-dihexadecanoyl-sn-glycero-3-phosphoethanolamine + H2O = N-hexadecanoylethanolamine + 1-hexadecanoyl-sn-glycero-3-phosphate + H(+). The catalysed reaction is N-(5Z,8Z,11Z,14Z-eicosatetraenoyl)-1-(9Z-octadecenoyl)-sn-glycero-3-phosphoethanolamine + H2O = N-(5Z,8Z,11Z,14Z-eicosatetraenoyl)-ethanolamine + 1-(9Z-octadecenoyl)-sn-glycero-3-phosphate + H(+). With respect to regulation, activated by divalent cations. Activated by bile acids. Activated by membrane phospholipids such as phosphatidylethanolamines. Inhibited by cardiolipins. In terms of biological role, D-type phospholipase that hydrolyzes N-acyl-phosphatidylethanolamines (NAPEs) to produce bioactive N-acylethanolamines/fatty acid ethanolamides (NAEs/FAEs) and phosphatidic acid. Cleaves the terminal phosphodiester bond of diacyl- and alkenylacyl-NAPEs, primarily playing a role in the generation of long-chain saturated and monounsaturated NAEs in the brain. May control NAPE homeostasis in dopaminergic neuron membranes and regulate neuron survival, partly through RAC1 activation. As a regulator of lipid metabolism in the adipose tissue, mediates the crosstalk between adipocytes, gut microbiota and immune cells to control body temperature and weight. In particular, regulates energy homeostasis by promoting cold-induced brown or beige adipocyte differentiation program to generate heat from fatty acids and glucose. Has limited D-type phospholipase activity toward N-acyl lyso-NAPEs. The sequence is that of N-acyl-phosphatidylethanolamine-hydrolyzing phospholipase D (Napepld) from Rattus norvegicus (Rat).